We begin with the raw amino-acid sequence, 384 residues long: MRRDQAQRPIIIAAGGTGGHFFPAEALAAELKRRGRQIVLMTDARSGGLTSTVFADTDRFVLPGAGIAGRGIRRAGQAVIALGHGVVKAGALLRRLEAGCIVGFGGYPCIPPVLGARLRARNVPVILHEQNAVLGRANRLLARKIHCLALSFASTSHVPAGTRTLVTGNPVRPAIAALAGTSYTPPGTEGVINLLILGGSLGARVLSDVVPAALALLPPALRQRMRVTQQCRAEDIDRVRMAYAACGIEAILAPFFTDVATLIADAHLVIARAGASTVAELATIGRPAIMVPLPGAIDDHQTANARILVDAQGGWMIRQPDFTPDTLAARIAGLLAEPGTLADAARNAARLGMQDAVARLADTVEQSLDTARAPQGDFKGEIKS.

Residues 17–19 (TGG), asparagine 131, arginine 172, serine 200, and glutamine 301 contribute to the UDP-N-acetyl-alpha-D-glucosamine site.

The protein belongs to the glycosyltransferase 28 family. MurG subfamily.

The protein resides in the cell inner membrane. The catalysed reaction is di-trans,octa-cis-undecaprenyl diphospho-N-acetyl-alpha-D-muramoyl-L-alanyl-D-glutamyl-meso-2,6-diaminopimeloyl-D-alanyl-D-alanine + UDP-N-acetyl-alpha-D-glucosamine = di-trans,octa-cis-undecaprenyl diphospho-[N-acetyl-alpha-D-glucosaminyl-(1-&gt;4)]-N-acetyl-alpha-D-muramoyl-L-alanyl-D-glutamyl-meso-2,6-diaminopimeloyl-D-alanyl-D-alanine + UDP + H(+). The protein operates within cell wall biogenesis; peptidoglycan biosynthesis. Its function is as follows. Cell wall formation. Catalyzes the transfer of a GlcNAc subunit on undecaprenyl-pyrophosphoryl-MurNAc-pentapeptide (lipid intermediate I) to form undecaprenyl-pyrophosphoryl-MurNAc-(pentapeptide)GlcNAc (lipid intermediate II). This chain is UDP-N-acetylglucosamine--N-acetylmuramyl-(pentapeptide) pyrophosphoryl-undecaprenol N-acetylglucosamine transferase, found in Granulibacter bethesdensis (strain ATCC BAA-1260 / CGDNIH1).